A 339-amino-acid polypeptide reads, in one-letter code: Leucine-rich repeat-containing protein 59 (339 aa).

Residues 1–282 (MARGGGKSGS…KHSWSRSVLR (282 aa)) lie on the Cytoplasmic side of the membrane. 4 LRR repeats span residues 10–31 (SLKD…SEVP), 40–61 (KATV…FCSL), 63–84 (HLVK…FGRL), and 86–107 (SLQH…FAQL). A coiled-coil region spans residues 181 to 254 (MKVIQSEQDR…EMEKKTKKET (74 aa)). The segment at 186–275 (SEQDRERQRK…PPQPARHKHS (90 aa)) is disordered. The segment covering 187–256 (EQDRERQRKL…EKKTKKETVQ (70 aa)) has biased composition (basic and acidic residues). The helical transmembrane segment at 283 to 300 (ALLLVLLCILCTLAVCKL) threads the bilayer. At 301-339 (TELQHQPLCVSVNTLYEDVVAAVQNHKTLQNMLQQNSQQ) the chain is on the lumenal side.

As to quaternary structure, interacts with SGO1.

The protein localises to the microsome membrane. The protein resides in the endoplasmic reticulum membrane. It is found in the nucleus envelope. Required for nuclear import of FGF1. This chain is Leucine-rich repeat-containing protein 59 (LRRC59), found in Gallus gallus (Chicken).